Consider the following 264-residue polypeptide: Adenosylcobinamide-GDP ribazoletransferase (264 aa).

6 consecutive transmembrane segments (helical) span residues 39–59 (IAYA…AILI), 63–83 (ALGL…VLLT), 121–141 (ACAL…LLAL), 148–168 (LALI…LEFL), 201–221 (LLIV…LSVL), and 241–261 (VAGA…LIYA).

Belongs to the CobS family. Mg(2+) serves as cofactor.

Its subcellular location is the cell inner membrane. It catalyses the reaction alpha-ribazole + adenosylcob(III)inamide-GDP = adenosylcob(III)alamin + GMP + H(+). It carries out the reaction alpha-ribazole 5'-phosphate + adenosylcob(III)inamide-GDP = adenosylcob(III)alamin 5'-phosphate + GMP + H(+). The protein operates within cofactor biosynthesis; adenosylcobalamin biosynthesis; adenosylcobalamin from cob(II)yrinate a,c-diamide: step 7/7. Joins adenosylcobinamide-GDP and alpha-ribazole to generate adenosylcobalamin (Ado-cobalamin). Also synthesizes adenosylcobalamin 5'-phosphate from adenosylcobinamide-GDP and alpha-ribazole 5'-phosphate. The protein is Adenosylcobinamide-GDP ribazoletransferase of Azorhizobium caulinodans (strain ATCC 43989 / DSM 5975 / JCM 20966 / LMG 6465 / NBRC 14845 / NCIMB 13405 / ORS 571).